We begin with the raw amino-acid sequence, 329 residues long: COP9 signalosome complex subunit 6 (329 aa).

The region spanning 44–175 is the MPN domain; that stretch reads TRVKAQAACS…VTIYESELHV (132 aa).

The protein belongs to the peptidase M67A family. CSN6 subfamily. Component of the CSN complex, probably composed of CSN1, CSN2, CSN3, CSN4, CSN5, CSN6, CSN7 and CSN8.

Component of the COP9 signalosome complex (CSN), a complex involved in various cellular and developmental processes such as photomorphogenesis and response to hormones. The CSN complex is an essential regulator of the ubiquitin (Ubl) conjugation pathway by mediating the deneddylation of the cullin subunits of SCF-type E3 ligase complexes, leading to decrease the Ubl ligase activity of SCF. Involved in early response to iron deficiency. The chain is COP9 signalosome complex subunit 6 from Oryza sativa subsp. japonica (Rice).